The primary structure comprises 200 residues: 3-isopropylmalate dehydratase small subunit (200 aa).

The protein belongs to the LeuD family. LeuD type 1 subfamily. Heterodimer of LeuC and LeuD.

The catalysed reaction is (2R,3S)-3-isopropylmalate = (2S)-2-isopropylmalate. It functions in the pathway amino-acid biosynthesis; L-leucine biosynthesis; L-leucine from 3-methyl-2-oxobutanoate: step 2/4. Functionally, catalyzes the isomerization between 2-isopropylmalate and 3-isopropylmalate, via the formation of 2-isopropylmaleate. The chain is 3-isopropylmalate dehydratase small subunit from Haemophilus influenzae (strain 86-028NP).